The following is a 415-amino-acid chain: Ammonium transporter Rh type A (415 aa).

The Cytoplasmic portion of the chain corresponds to 1 to 2 (MR). Residues 3 to 23 (FIFPTIAVLLEASMIVLFGFF) form a helical membrane-spanning segment. Residues 24–51 (VKYETEQNAIQQPNSTNSTKVDRSLELY) are Extracellular-facing. Residues Asn37 and Asn40 are each glycosylated (N-linked (GlcNAc...) asparagine). The helical transmembrane segment at 52–72 (PLFQDVHVMIFVGFGFLMTFL) threads the bilayer. Topologically, residues 73-76 (KKYG) are cytoplasmic. Residues 77-97 (FSSVGINLLIAALGLQWGTFV) traverse the membrane as a helical segment. Over 98–115 (QGMVHRHGQTIYIGIKNM) the chain is Extracellular. The chain crosses the membrane as a helical span at residues 116-136 (INADFSTATVLISFGAVLGKI). The Cytoplasmic segment spans residues 137–142 (SPTQML). A helical transmembrane segment spans residues 143-163 (IMTIIEITVFAGNEYVVGEIF). The Extracellular portion of the chain corresponds to 164-167 (QASD). A helical transmembrane segment spans residues 168–188 (IGASMTIHAFGAYFGLAVAGV). Topologically, residues 189-208 (LYRTGLRKGHEKEESEYHSD) are cytoplasmic. The helical transmembrane segment at 209 to 229 (LFAMIGTLFLWMFWPSFNSAI) threads the bilayer. Over 230-236 (AETAEEQ) the chain is Extracellular. The helical transmembrane segment at 237-257 (YLAIINTYLSLVACVLTAYAM) threads the bilayer. Residues 258–268 (SSLVGHRGKLD) lie on the Cytoplasmic side of the membrane. The chain crosses the membrane as a helical span at residues 269–287 (MVHIQNATLAGGVAVGTCA). Over 288 to 290 (DMK) the chain is Extracellular. Residues 291–311 (IHPYGSLIIGSIAGMVSVLGF) form a helical membrane-spanning segment. Over 312-332 (RFLTPCLTAKLRIHDTCGVHN) the chain is Cytoplasmic. The chain crosses the membrane as a helical span at residues 333-353 (LHGLPGVVGGLSSIVAILLGV). Over 354 to 363 (STASSMTMQA) the chain is Extracellular. A helical membrane pass occupies residues 364 to 384 (AALGSSIGSAIAGGLITGLIL). The Cytoplasmic portion of the chain corresponds to 385–415 (RFIVRGQPSKDNFFDDSVYWEVPKEKELDNV).

The protein belongs to the ammonium transporter (TC 2.A.49) family. Rh subfamily. As to quaternary structure, homodimer. Heterotrimer; a RHCE monomer interacts with a RHAG homodimer. Component of the ankyrin-1 complex in the erythrocyte, composed of ANK1, RHCE, RHAG, SLC4A1, EPB42, GYPA, GYPB and AQP1. Interacts with GYPB (via the N-terminal); this interaction bridges the (RHAG)2(RHCE) heterotrimer with the SLC4A1 Band 3 I dimer complexed with GYPA. Post-translationally, glycosylated.

The protein localises to the membrane. The enzyme catalyses methylamine(out) = methylamine(in). The catalysed reaction is NH4(+)(in) = NH4(+)(out). It catalyses the reaction CO2(out) = CO2(in). Component of the ankyrin-1 complex, a multiprotein complex involved in the stability and shape of the erythrocyte membrane. Heterotrimer with RHCE (RHAG)2(RHCE), that transports ammonium and its related derivative methylammonium, in both neutral and ionic forms, across the erythrocyte membrane. The transport of NH4(+) is electrogenic and masks the NH3 transport. Also, may act as a CO2 channel. Moreover in erythrocyte, regulates RHD membrane expression and is associated with rhesus blood group antigen expression. In Canis lupus familiaris (Dog), this protein is Ammonium transporter Rh type A.